The primary structure comprises 547 residues: Pyochelin synthase PchD (547 aa).

The protein belongs to the ATP-dependent AMP-binding enzyme family.

The enzyme catalyses salicylate + holo-[ACP] + ATP = salicyl-[ACP] + AMP + diphosphate. It participates in siderophore biosynthesis. The protein operates within antifungal biosynthesis. Involved in the biosynthesis of the siderophore pyochelin. Specifically adenylates salicylate and loads it onto the holo form of PchE via a thioester linkage to the phosphopanthetheine moiety. Is also involved in the synthesis of the antifungal antibiotic dihydroaeruginoic acid (Dha or hydroxyphenyl-thiazolinyl-carboxylate), a precursor of pyochelin. The protein is Pyochelin synthase PchD of Pseudomonas aeruginosa (strain UCBPP-PA14).